Consider the following 445-residue polypeptide: GTPase Der (445 aa).

EngA-type G domains lie at 3–167 (PVIA…YAGQ) and 180–353 (IKIA…AAAM). GTP is bound by residues 9-16 (GRPNVGKS), 56-60 (DTGGF), 119-122 (NKAE), 186-193 (GRPNVGKS), 233-237 (DTAGL), and 298-301 (NKWD). Residues 354–438 (AKLPTPKLTR…PLRIEFRSSN (85 aa)) form the KH-like domain.

Belongs to the TRAFAC class TrmE-Era-EngA-EngB-Septin-like GTPase superfamily. EngA (Der) GTPase family. As to quaternary structure, associates with the 50S ribosomal subunit.

Functionally, GTPase that plays an essential role in the late steps of ribosome biogenesis. The sequence is that of GTPase Der from Burkholderia ambifaria (strain MC40-6).